The sequence spans 186 residues: Peptidyl-tRNA hydrolase (186 aa).

Tyr-14 contributes to the tRNA binding site. Residue His-19 is the Proton acceptor of the active site. TRNA contacts are provided by Phe-65, Asn-67, and Asn-113.

Belongs to the PTH family. As to quaternary structure, monomer.

It localises to the cytoplasm. It carries out the reaction an N-acyl-L-alpha-aminoacyl-tRNA + H2O = an N-acyl-L-amino acid + a tRNA + H(+). Its function is as follows. Hydrolyzes ribosome-free peptidyl-tRNAs (with 1 or more amino acids incorporated), which drop off the ribosome during protein synthesis, or as a result of ribosome stalling. Catalyzes the release of premature peptidyl moieties from peptidyl-tRNA molecules trapped in stalled 50S ribosomal subunits, and thus maintains levels of free tRNAs and 50S ribosomes. The polypeptide is Peptidyl-tRNA hydrolase (Limosilactobacillus reuteri (strain DSM 20016) (Lactobacillus reuteri)).